The chain runs to 217 residues: Adapter protein MecA (217 aa).

This sequence belongs to the MecA family. In terms of assembly, homodimer.

Enables the recognition and targeting of unfolded and aggregated proteins to the ClpC protease or to other proteins involved in proteolysis. In Listeria monocytogenes serotype 4b (strain CLIP80459), this protein is Adapter protein MecA.